Reading from the N-terminus, the 156-residue chain is Ribosomal RNA large subunit methyltransferase H (156 aa).

S-adenosyl-L-methionine is bound by residues Leu73, Gly104, and Leu123–Leu128.

The protein belongs to the RNA methyltransferase RlmH family. As to quaternary structure, homodimer.

The protein resides in the cytoplasm. The enzyme catalyses pseudouridine(1915) in 23S rRNA + S-adenosyl-L-methionine = N(3)-methylpseudouridine(1915) in 23S rRNA + S-adenosyl-L-homocysteine + H(+). In terms of biological role, specifically methylates the pseudouridine at position 1915 (m3Psi1915) in 23S rRNA. This is Ribosomal RNA large subunit methyltransferase H from Neisseria meningitidis serogroup C (strain 053442).